We begin with the raw amino-acid sequence, 153 residues long: Pheromone-binding protein Gp-9 (153 aa).

Residues Met1–Ala19 form the signal peptide. Disulfide bonds link Cys37–Cys77, Cys73–Cys129, and Cys118–Cys138.

Belongs to the PBP/GOBP family. Homodimer.

It localises to the secreted. Its function is as follows. Colony queen number, a major feature of social organization, is associated with worker genotype for Gp-9. Colonies are headed by either a single reproductive queen (monogyne form) or multiple queens (polygyne form). Differences in worker Gp-9 genotypes between social forms may cause differences in workers' abilities to recognize queens and regulate their numbers. The chain is Pheromone-binding protein Gp-9 from Solenopsis sp. (strain B0-153) (Fire ant).